The chain runs to 345 residues: uncharacterized protein (345 aa).

Belongs to the proline racemase family.

This is an uncharacterized protein from Bacillus anthracis.